A 262-amino-acid chain; its full sequence is 1-(5-phosphoribosyl)-5-[(5-phosphoribosylamino)methylideneamino] imidazole-4-carboxamide isomerase (262 aa).

The active-site Proton acceptor is D8. D130 serves as the catalytic Proton donor.

It belongs to the HisA/HisF family.

It is found in the cytoplasm. The enzyme catalyses 1-(5-phospho-beta-D-ribosyl)-5-[(5-phospho-beta-D-ribosylamino)methylideneamino]imidazole-4-carboxamide = 5-[(5-phospho-1-deoxy-D-ribulos-1-ylimino)methylamino]-1-(5-phospho-beta-D-ribosyl)imidazole-4-carboxamide. Its pathway is amino-acid biosynthesis; L-histidine biosynthesis; L-histidine from 5-phospho-alpha-D-ribose 1-diphosphate: step 4/9. The chain is 1-(5-phosphoribosyl)-5-[(5-phosphoribosylamino)methylideneamino] imidazole-4-carboxamide isomerase from Chloroherpeton thalassium (strain ATCC 35110 / GB-78).